The chain runs to 172 residues: Cystatin-like cysteine protease inhibitor EPIC4 (172 aa).

Positions 1–17 are cleaved as a signal peptide; it reads MRASLSILVAFPALAAA. The Secondary area of contact signature appears at 71 to 75; sequence QVVAG. The tract at residues 129-172 is disordered; sequence EAATASSSSTPAPTPASTSTSASSSEETMLQSSVQQRAMFSDFV. Residues 130–156 show a composition bias toward low complexity; sequence AATASSSSTPAPTPASTSTSASSSEET. Positions 157–166 are enriched in polar residues; sequence MLQSSVQQRA.

This sequence belongs to the cystatin family.

It localises to the secreted. In terms of biological role, secreted effector that interacts with and inhibits host apoplastic pathogenesis-related papain-like cysteine proteases. Inhibition of host proteases by a pathogen extracellular protease inhibitor forms a specific type of defense-counterdefense mechanism between plants and microbial pathogens. The chain is Cystatin-like cysteine protease inhibitor EPIC4 from Phytophthora infestans (Potato late blight agent).